A 476-amino-acid polypeptide reads, in one-letter code: MTEVETTHMNAGTESQQEPAELAEKQKAIGNAFYKEKKYAEAIKAYTEAIDLGSDSALAIYYSNRAATYMQIGEFELALCDAKQSDRIKPDVPKTQSRIRQAYEGLSILNEAEVYLKNKQAGLALNALDRLQRRIDSTTQPPMSWMYLKAQVYIFQNDMDRAQKIAHDVLRLNPKNVEALVLRGKVMYYSGENAKAITHFQEALKLDPDCTTAKTLFKQVRKLENTKNQGNDLFRQGNYQDAYEKYSEALQIDPDNKETVAKLYMNRATVLLRLKRPEEALSDSDNALAIDSSYLKGLKVRAKAHEALEKWEEAVRDVQSAIELDASDANLRQELRRLQLELKKSKRKDHYKILGVSKEATDIEIKKAYRKLALVYHPDKNAGNLEAEARFKEVGEAYTILSDPESRRRFDSGVDLEPGMEGGAGMDPFDILRAYQAGGSFPGGGFPGGGFPGGSYNSQGFGMGGGFPGFTSFQFS.

The segment at 1-22 is disordered; the sequence is MTEVETTHMNAGTESQQEPAEL. The span at 7–18 shows a compositional bias: polar residues; sequence THMNAGTESQQE. TPR repeat units lie at residues 23–56, 59–92, 143–176, 177–210, 223–256, 261–294, and 295–328; these read AEKQ…GSDS, AIYY…KPDV, MSWM…NPKN, VEAL…DPDC, LENT…DPDN, AKLY…DSSY, and LKGL…DASD. One can recognise a J domain in the interval 349-414; the sequence is DHYKILGVSK…ESRRRFDSGV (66 aa).

The protein resides in the cytoplasm. In Schizosaccharomyces pombe (strain 972 / ATCC 24843) (Fission yeast), this protein is DnaJ homolog subfamily C member 7 homolog.